Here is a 134-residue protein sequence, read N- to C-terminus: Syncollin (134 aa).

Positions Met-1–Gly-21 are cleaved as a signal peptide.

As to quaternary structure, monomer and homooligomer; most probably hexameric. Interacts with GP2. According to PubMed:10753942 interaction with syntaxins shown in PubMed:9244306 is physiologically questionable. Contains intrachain disulfide bonds. Specifically expressed in pancreas and also detected in secretory granules of parotid gland (at protein level). Expressed in pancreas, spleen, small intestine, lung and neutrophilic granulocytes (at protein level). Expressed by epithelial cells in duodenum and colon.

Its subcellular location is the zymogen granule membrane. The protein resides in the zymogen granule lumen. Its function is as follows. Functions in exocytosis in pancreatic acinar cells regulating the fusion of zymogen granules with each other. May have a pore-forming activity on membranes and regulate exocytosis in other exocrine tissues. This chain is Syncollin (Sycn), found in Rattus norvegicus (Rat).